A 363-amino-acid chain; its full sequence is D-alanine--D-alanine ligase (363 aa).

The region spanning 148–353 is the ATP-grasp domain; it reads KKLLAAEGLP…YGTLVSTLIE (206 aa). Position 176–231 (176–231) interacts with ATP; it reads RERLGLPVFVKPARAGSSIGITKVDDWAALDTAIAAAREHDPKVIVEAGIVGREVE. Residues D308, E320, and N322 each coordinate Mg(2+).

This sequence belongs to the D-alanine--D-alanine ligase family. Requires Mg(2+) as cofactor. Mn(2+) serves as cofactor.

It is found in the cytoplasm. The catalysed reaction is 2 D-alanine + ATP = D-alanyl-D-alanine + ADP + phosphate + H(+). Its pathway is cell wall biogenesis; peptidoglycan biosynthesis. Its function is as follows. Cell wall formation. This is D-alanine--D-alanine ligase from Nocardia farcinica (strain IFM 10152).